Here is a 238-residue protein sequence, read N- to C-terminus: Pyridoxine 5'-phosphate synthase (238 aa).

Position 9 (Asn-9) interacts with 3-amino-2-oxopropyl phosphate. 1-deoxy-D-xylulose 5-phosphate is bound at residue 11–12 (DH). Position 20 (Arg-20) interacts with 3-amino-2-oxopropyl phosphate. His-45 acts as the Proton acceptor in catalysis. Positions 47 and 52 each coordinate 1-deoxy-D-xylulose 5-phosphate. The active-site Proton acceptor is Glu-72. Thr-102 provides a ligand contact to 1-deoxy-D-xylulose 5-phosphate. His-189 functions as the Proton donor in the catalytic mechanism. 3-amino-2-oxopropyl phosphate contacts are provided by residues Gly-190 and 211 to 212 (GH).

This sequence belongs to the PNP synthase family. In terms of assembly, homooctamer; tetramer of dimers.

It is found in the cytoplasm. The enzyme catalyses 3-amino-2-oxopropyl phosphate + 1-deoxy-D-xylulose 5-phosphate = pyridoxine 5'-phosphate + phosphate + 2 H2O + H(+). It functions in the pathway cofactor biosynthesis; pyridoxine 5'-phosphate biosynthesis; pyridoxine 5'-phosphate from D-erythrose 4-phosphate: step 5/5. Its function is as follows. Catalyzes the complicated ring closure reaction between the two acyclic compounds 1-deoxy-D-xylulose-5-phosphate (DXP) and 3-amino-2-oxopropyl phosphate (1-amino-acetone-3-phosphate or AAP) to form pyridoxine 5'-phosphate (PNP) and inorganic phosphate. This Ehrlichia ruminantium (strain Gardel) protein is Pyridoxine 5'-phosphate synthase.